A 245-amino-acid polypeptide reads, in one-letter code: MDRWAGKVAVVTGASSGIGAAITTDLAKAGMVVVGLARRVERVEALKANLPESAKPRLHAVKCDVSKEEDITQVFKWVEKKFGGVDVLVNNAGILRQTDLLGTDNGQMLREVLDTNVMGLVLCSQKAYQSMKKRSVDGHIVHINSVVGHKVFDFPQSNIYPASKHAVTAITETMRNELRNAGSRIKVTSISPGVVRTEILPESIIEGGHALLESEDISEAVLYVLGTPPRVQVHELTIKPVGEKF.

Residues 11–40 (VTGA…ARRV) and aspartate 64 each bind NAD(+). Serine 145 contributes to the substrate binding site. Residue tyrosine 160 is the Proton acceptor of the active site. Position 164 (lysine 164) interacts with NAD(+).

Belongs to the short-chain dehydrogenases/reductases (SDR) family. Homodimer. In terms of tissue distribution, highly expressed level in the midgut and brain in adult females, and at lower level in the abdominal and thoracic ganglia. High levels are detected in corpora allata (CA), Malpighian tubules and fat body.

The enzyme catalyses (2E,6E)-farnesol + NADP(+) = (2E,6E)-farnesal + NADPH + H(+). Its function is as follows. Mediates oxidation of farnesol into farnesal, a precursor of juvenile hormone in the corpora allata (CA), the glands that synthesize juvenile hormone. Able to oxidize C(10) to C(15) isoprenoid and aliphatic alcohols. This is Farnesol dehydrogenase from Aedes aegypti (Yellowfever mosquito).